A 269-amino-acid polypeptide reads, in one-letter code: Surfeit locus protein 4 (269 aa).

Helical transmembrane passes span 64–84 (LLAS…CVLV), 92–112 (YACF…SILW), 179–199 (FFSI…AIGF), 203–223 (LAAL…NAFW), and 239–259 (FFQT…GPGG). The Di-lysine motif signature appears at 266–269 (KKEW).

It belongs to the SURF4 family. Found in a complex composed at least of SURF4, TMED2 and TMED10. May interact with LMAN1. Interacts with ZFYVE27 and with KIF5A in a ZFYVE27-dependent manner. Interacts with STING1. Interacts with SAR1B. Interacts with TMEM41B.

Its subcellular location is the endoplasmic reticulum membrane. The protein resides in the endoplasmic reticulum-Golgi intermediate compartment membrane. It localises to the golgi apparatus membrane. In terms of biological role, endoplasmic reticulum cargo receptor that mediates the export of lipoproteins by recruiting cargos into COPII vesicles to facilitate their secretion. Acts as a cargo receptor for lipoproteins bearing both APOB and APOA1, thereby regulating lipoprotein delivery and the maintenance of lipid homeostasis. Synergizes with the GTPase SAR1B to mediate transport of circulating lipoproteins. Promotes the secretion of PCSK9. Also mediates the efficient secretion of erythropoietin (EPO). May also play a role in the maintenance of the architecture of the endoplasmic reticulum-Golgi intermediate compartment and of the Golgi. In Homo sapiens (Human), this protein is Surfeit locus protein 4.